The sequence spans 106 residues: Large ribosomal subunit protein bL21 (106 aa).

The protein belongs to the bacterial ribosomal protein bL21 family. Part of the 50S ribosomal subunit. Contacts protein L20.

In terms of biological role, this protein binds to 23S rRNA in the presence of protein L20. This chain is Large ribosomal subunit protein bL21, found in Xylella fastidiosa (strain Temecula1 / ATCC 700964).